The primary structure comprises 958 residues: Glycine dehydrogenase (decarboxylating) 2 (958 aa).

Position 707 is an N6-(pyridoxal phosphate)lysine (lysine 707).

This sequence belongs to the GcvP family. In terms of assembly, the glycine cleavage system is composed of four proteins: P, T, L and H. Pyridoxal 5'-phosphate is required as a cofactor.

The catalysed reaction is N(6)-[(R)-lipoyl]-L-lysyl-[glycine-cleavage complex H protein] + glycine + H(+) = N(6)-[(R)-S(8)-aminomethyldihydrolipoyl]-L-lysyl-[glycine-cleavage complex H protein] + CO2. In terms of biological role, the glycine cleavage system catalyzes the degradation of glycine. The P protein binds the alpha-amino group of glycine through its pyridoxal phosphate cofactor; CO(2) is released and the remaining methylamine moiety is then transferred to the lipoamide cofactor of the H protein. This Pseudomonas aeruginosa (strain ATCC 15692 / DSM 22644 / CIP 104116 / JCM 14847 / LMG 12228 / 1C / PRS 101 / PAO1) protein is Glycine dehydrogenase (decarboxylating) 2 (gcvP2).